Reading from the N-terminus, the 645-residue chain is Zinc finger protein 235 (645 aa).

The 79-residue stretch at 8-86 folds into the KRAB domain; the sequence is VTFRDVAVVF…TSHDVNKLAR (79 aa). Disordered stretches follow at residues 112–144 and 255–280; these read GAEQPSQAPEDDGCLENLPSNHSSSSDNQEFLS and KKSPVHSTHKDTRHSPSVPIQPSVHP. Over residues 129-144 the composition is skewed to polar residues; it reads LPSNHSSSSDNQEFLS. 13 consecutive C2H2-type zinc fingers follow at residues 285 to 307, 313 to 335, 341 to 363, 369 to 391, 397 to 419, 425 to 447, 453 to 475, 481 to 503, 509 to 531, 537 to 559, 565 to 587, 593 to 615, and 621 to 643; these read YWCHECGKGFRQSSALQTHQRVH, YRCDSCGKGFSRSSDLNIHRRVH, YKCEVCGKGFTQWAHLQAHERIH, YKCGDCGKRFSCSSNLHTHQRVH, YECNECGKRFSLSGNLDIHQRVH, YKCEECGKGFSSASSFQSHQRVH, FHCSVCGKNFSRSSHFLDHQRIH, YRCEVCGKRFPWSLSLHSHQSVH, YKCGECGKGFSHASSLQAHHSVH, FKCNVCQKQFSKTSNLQAHQRVH, YKCDTCGKAFSQKSSLQVHQRIH, FKCEECGKEFRWSVGLSSHQRVH, and YTCQQCGKGFSQASYFHMHQRVH.

This sequence belongs to the krueppel C2H2-type zinc-finger protein family.

The protein resides in the nucleus. Functionally, may be involved in transcriptional regulation. This is Zinc finger protein 235 (Znf235) from Mus musculus (Mouse).